We begin with the raw amino-acid sequence, 499 residues long: Probable folate-biopterin transporter 2 (499 aa).

The next 12 helical transmembrane spans lie at 43 to 63 (WSFVFGVVSLYGINQGLGGSL), 92 to 112 (IPWIIKPLWGILTDVLPIFGF), 116 to 136 (PYFILAGVLGVVSLLFISLHS), 141 to 161 (YLALFWMTISSAAMAIADVTI), 185 to 205 (LSSSIGALLGFFMSGILVHLV), 209 to 229 (GVFGLLTFPFALVSVVGIVFS), 266 to 286 (LYMYISLTLGLNIHEGLFYWF), 302 to 322 (FILSIGSIGSILAATLYQLVL), 330 to 350 (LCLWTQLLFALSGMLDLILVF), 354 to 374 (LKFGLPDYLFIVVDEIVSQMI), 399 to 419 (FALLMSIDNAGLMTSSWLGGI), and 435 to 455 (WLAVLVRNVMRLLPLCFLFLV).

The protein belongs to the major facilitator superfamily. Folate-biopterin transporter (TC 2.A.71) family.

The protein resides in the membrane. Its function is as follows. Could mediate folate transport. The chain is Probable folate-biopterin transporter 2 from Arabidopsis thaliana (Mouse-ear cress).